Reading from the N-terminus, the 364-residue chain is Probable protein disulfide-isomerase A6 (364 aa).

The first 28 residues, 1 to 28, serve as a signal peptide directing secretion; that stretch reads MKMEMHQIWSRIALASFAFAILFVSVSA. Thioredoxin domains are found at residues 29–137 and 139–256; these read DDVV…TEGG and NVKI…EKSG. Residues C58, C61, C177, and C180 each act as nucleophile in the active site. 2 cysteine pairs are disulfide-bonded: C58-C61 and C177-C180.

This sequence belongs to the protein disulfide isomerase family.

It localises to the endoplasmic reticulum lumen. It catalyses the reaction Catalyzes the rearrangement of -S-S- bonds in proteins.. This is Probable protein disulfide-isomerase A6 from Medicago sativa (Alfalfa).